The chain runs to 443 residues: UDP-N-acetylmuramate--L-alanine ligase (443 aa).

Residue 110-116 coordinates ATP; sequence GAHGKTS.

Belongs to the MurCDEF family.

Its subcellular location is the cytoplasm. The enzyme catalyses UDP-N-acetyl-alpha-D-muramate + L-alanine + ATP = UDP-N-acetyl-alpha-D-muramoyl-L-alanine + ADP + phosphate + H(+). It participates in cell wall biogenesis; peptidoglycan biosynthesis. Functionally, cell wall formation. The sequence is that of UDP-N-acetylmuramate--L-alanine ligase from Streptococcus agalactiae serotype V (strain ATCC BAA-611 / 2603 V/R).